Reading from the N-terminus, the 259-residue chain is Phosphatidylglycerol--prolipoprotein diacylglyceryl transferase (259 aa).

4 helical membrane-spanning segments follow: residues 9–29 (IIFSIGPLAVSWYSLSYVVGI), 55–75 (FITYAVIGIIVGGRLGFVLLY), 92–112 (EGGMSFHGGALGVIIAAYLFC), and 117–137 (INFLSLTDIIAPVVPIGLFLG). R138 is a binding site for a 1,2-diacyl-sn-glycero-3-phospho-(1'-sn-glycerol). A run of 3 helical transmembrane segments spans residues 172–192 (QLYEAFFEGLVLFCILAYATF), 201–221 (GLNSGIFLIFYALFRIAIEIF), and 228–248 (IGFILDSLTMGQILSVPMLLL).

This sequence belongs to the Lgt family.

The protein localises to the cell inner membrane. The enzyme catalyses L-cysteinyl-[prolipoprotein] + a 1,2-diacyl-sn-glycero-3-phospho-(1'-sn-glycerol) = an S-1,2-diacyl-sn-glyceryl-L-cysteinyl-[prolipoprotein] + sn-glycerol 1-phosphate + H(+). The protein operates within protein modification; lipoprotein biosynthesis (diacylglyceryl transfer). In terms of biological role, catalyzes the transfer of the diacylglyceryl group from phosphatidylglycerol to the sulfhydryl group of the N-terminal cysteine of a prolipoprotein, the first step in the formation of mature lipoproteins. This chain is Phosphatidylglycerol--prolipoprotein diacylglyceryl transferase, found in Rickettsia felis (strain ATCC VR-1525 / URRWXCal2) (Rickettsia azadi).